The sequence spans 1076 residues: Carbamoyl phosphate synthase large chain (1076 aa).

A carboxyphosphate synthetic domain region spans residues 1-403 (MPKRTDIQSI…SLQKALRGLE (403 aa)). ATP contacts are provided by arginine 129, arginine 169, glycine 175, glycine 176, glutamate 208, leucine 210, glutamate 215, glycine 241, isoleucine 242, histidine 243, glutamine 285, and glutamate 299. The 196-residue stretch at 133–328 (DKAMKSIGLE…IAKVAAKLAV (196 aa)) folds into the ATP-grasp 1 domain. Residues glutamine 285, glutamate 299, and asparagine 301 each coordinate Mg(2+). Residues glutamine 285, glutamate 299, and asparagine 301 each coordinate Mn(2+). The tract at residues 404–553 (VGAAGLDEKV…YSTYDEECEA (150 aa)) is oligomerization domain. Positions 554–935 (NPTDKDKIMV…AYAKAELGCG (382 aa)) are carbamoyl phosphate synthetic domain. The 192-residue stretch at 678-869 (QQAVQRLGLK…LAKIAARVMV (192 aa)) folds into the ATP-grasp 2 domain. 10 residues coordinate ATP: arginine 714, arginine 753, leucine 755, glutamate 760, glycine 785, valine 786, histidine 787, serine 788, glutamine 828, and glutamate 840. The Mg(2+) site is built by glutamine 828, glutamate 840, and asparagine 842. Glutamine 828, glutamate 840, and asparagine 842 together coordinate Mn(2+). In terms of domain architecture, MGS-like spans 936-1076 (SVYPEGGRAL…LHARVKANQA (141 aa)). The segment at 936–1076 (SVYPEGGRAL…LHARVKANQA (141 aa)) is allosteric domain.

This sequence belongs to the CarB family. As to quaternary structure, composed of two chains; the small (or glutamine) chain promotes the hydrolysis of glutamine to ammonia, which is used by the large (or ammonia) chain to synthesize carbamoyl phosphate. Tetramer of heterodimers (alpha,beta)4. Requires Mg(2+) as cofactor. Mn(2+) serves as cofactor.

It carries out the reaction hydrogencarbonate + L-glutamine + 2 ATP + H2O = carbamoyl phosphate + L-glutamate + 2 ADP + phosphate + 2 H(+). The enzyme catalyses hydrogencarbonate + NH4(+) + 2 ATP = carbamoyl phosphate + 2 ADP + phosphate + 2 H(+). It participates in amino-acid biosynthesis; L-arginine biosynthesis; carbamoyl phosphate from bicarbonate: step 1/1. Its pathway is pyrimidine metabolism; UMP biosynthesis via de novo pathway; (S)-dihydroorotate from bicarbonate: step 1/3. In terms of biological role, large subunit of the glutamine-dependent carbamoyl phosphate synthetase (CPSase). CPSase catalyzes the formation of carbamoyl phosphate from the ammonia moiety of glutamine, carbonate, and phosphate donated by ATP, constituting the first step of 2 biosynthetic pathways, one leading to arginine and/or urea and the other to pyrimidine nucleotides. The large subunit (synthetase) binds the substrates ammonia (free or transferred from glutamine from the small subunit), hydrogencarbonate and ATP and carries out an ATP-coupled ligase reaction, activating hydrogencarbonate by forming carboxy phosphate which reacts with ammonia to form carbamoyl phosphate. The chain is Carbamoyl phosphate synthase large chain from Vibrio cholerae serotype O1 (strain ATCC 39315 / El Tor Inaba N16961).